A 99-amino-acid chain; its full sequence is Cell division topological specificity factor (99 aa).

The protein belongs to the MinE family.

Prevents the cell division inhibition by proteins MinC and MinD at internal division sites while permitting inhibition at polar sites. This ensures cell division at the proper site by restricting the formation of a division septum at the midpoint of the long axis of the cell. The sequence is that of Cell division topological specificity factor from Tolumonas auensis (strain DSM 9187 / NBRC 110442 / TA 4).